The following is a 551-amino-acid chain: DNA ligase (551 aa).

Residue Glu-246 coordinates ATP. Lys-248 functions as the N6-AMP-lysine intermediate in the catalytic mechanism. ATP is bound by residues Arg-253, Arg-268, Glu-298, Phe-337, Arg-414, and Lys-420.

Belongs to the ATP-dependent DNA ligase family. Mg(2+) serves as cofactor.

The catalysed reaction is ATP + (deoxyribonucleotide)n-3'-hydroxyl + 5'-phospho-(deoxyribonucleotide)m = (deoxyribonucleotide)n+m + AMP + diphosphate.. Its function is as follows. DNA ligase that seals nicks in double-stranded DNA during DNA replication, DNA recombination and DNA repair. The polypeptide is DNA ligase (Methanobrevibacter smithii (strain ATCC 35061 / DSM 861 / OCM 144 / PS)).